Here is a 349-residue protein sequence, read N- to C-terminus: Phenylalanine--tRNA ligase alpha subunit (349 aa).

Residue Glu259 coordinates Mg(2+).

It belongs to the class-II aminoacyl-tRNA synthetase family. Phe-tRNA synthetase alpha subunit type 1 subfamily. Tetramer of two alpha and two beta subunits. It depends on Mg(2+) as a cofactor.

The protein resides in the cytoplasm. It carries out the reaction tRNA(Phe) + L-phenylalanine + ATP = L-phenylalanyl-tRNA(Phe) + AMP + diphosphate + H(+). The polypeptide is Phenylalanine--tRNA ligase alpha subunit (Lactobacillus acidophilus (strain ATCC 700396 / NCK56 / N2 / NCFM)).